A 520-amino-acid polypeptide reads, in one-letter code: Catalase easC (520 aa).

The active site involves His-71. A heme-binding site is contributed by Tyr-361.

Belongs to the catalase family. It depends on heme as a cofactor.

Its pathway is alkaloid biosynthesis; ergot alkaloid biosynthesis. Its function is as follows. Catalase; part of the gene cluster that mediates the biosynthesis of fumiclavanine C, a fungal ergot alkaloid. DmaW catalyzes the first step of ergot alkaloid biosynthesis by condensing dimethylallyl diphosphate (DMAP) and tryptophan to form 4-dimethylallyl-L-tryptophan. The second step is catalyzed by the methyltransferase easF that methylates 4-dimethylallyl-L-tryptophan in the presence of S-adenosyl-L-methionine, resulting in the formation of 4-dimethylallyl-L-abrine. The catalase easC and the FAD-dependent oxidoreductase easE then transform 4-dimethylallyl-L-abrine to chanoclavine-I which is further oxidized by EasD in the presence of NAD(+), resulting in the formation of chanoclavine-I aldehyde. EasA reduces chanoclavine-I aldehyde to dihydrochanoclavine-I aldehyde that spontaneously dehydrates to form 6,8-dimethyl-6,7-didehydroergoline. EasG then catalyzes the reduction of 6,8-dimethyl-6,7-didehydroergoline to form festuclavine. Hydrolysis of festuclavine by easM then leads to the formation of fumigaclavine B which is in turn acetylated by easN to fumigaclavine A. Finally, easL catalyzes the conversion of fumigaclavine A into fumigaclavine C by attaching a dimethylallyl moiety to C-2 of the indole nucleus. This Aspergillus fumigatus (strain ATCC MYA-4609 / CBS 101355 / FGSC A1100 / Af293) (Neosartorya fumigata) protein is Catalase easC.